A 238-amino-acid chain; its full sequence is Endonuclease III homolog (238 aa).

Residues Arg-129 to Met-155 enclose the HhH domain. Lys-149 (nucleophile; for N-glycosylase activity) is an active-site residue. The [4Fe-4S] cluster site is built by Cys-217, Cys-224, Cys-227, and Cys-233.

This sequence belongs to the Nth/MutY family. It depends on [4Fe-4S] cluster as a cofactor.

The protein localises to the nucleus. The protein resides in the mitochondrion. It catalyses the reaction 2'-deoxyribonucleotide-(2'-deoxyribose 5'-phosphate)-2'-deoxyribonucleotide-DNA = a 3'-end 2'-deoxyribonucleotide-(2,3-dehydro-2,3-deoxyribose 5'-phosphate)-DNA + a 5'-end 5'-phospho-2'-deoxyribonucleoside-DNA + H(+). In terms of biological role, bifunctional DNA N-glycosylase with associated apurinic/apyrimidinic (AP) lyase function that catalyzes the first step in base excision repair (BER), the primary repair pathway for the repair of oxidative DNA damage. The DNA N-glycosylase activity releases the damaged DNA base from DNA by cleaving the N-glycosidic bond, leaving an AP site. The AP lyase activity cleaves the phosphodiester bond 3' to the AP site by a beta-elimination. Primarily recognizes and repairs oxidative base damage of pyrimidines. This Encephalitozoon cuniculi (strain GB-M1) (Microsporidian parasite) protein is Endonuclease III homolog.